A 1531-amino-acid chain; its full sequence is Myosin-17 (1531 aa).

Residues Ile8–Thr57 form the Myosin N-terminal SH3-like domain. The Myosin motor domain occupies Gly62 to Ala732. Residues Gly156–Thr163 and Asn209–Lys217 contribute to the ATP site. Actin-binding stretches follow at residues Leu495–Phe529, Asn531–Val554, Phe589–Leu613, and Leu613–Asn635. IQ domains lie at Leu758 to Ala787, Arg783 to Thr812, Ile806 to Ala835, Gln831 to Ser860, and Leu854 to Asp883. The stretch at Thr884 to Ser1056 forms a coiled coil. The disordered stretch occupies residues Leu1071–Asp1090. A compositionally biased stretch (polar residues) spans Glu1076 to Asp1090. The Dilute domain maps to Asp1159–Glu1470. Position 1517 is a phosphoserine (Ser1517).

It belongs to the TRAFAC class myosin-kinesin ATPase superfamily. Myosin family. Plant myosin class XI subfamily. As to quaternary structure, homodimer. Interacts with MYOB1, MYOB2 and MYOB3. Interacts with PHOX1 and PHOX2. In terms of tissue distribution, expressed ubiquitously.

It is found in the cytoplasm. Myosin heavy chain that is required for the cell cycle-regulated transport of various organelles and proteins for their segregation. Functions by binding with its tail domain to receptor proteins on organelles and exerting force with its N-terminal motor domain against actin filaments, thereby transporting its cargo along polarized actin cables. Involved in the tip growth of root hair cells and in the elongation of trichome stalk and branches. Plays a major role in trafficking of Golgi stacks, mitochondria and peroxisomes during root hair development. Acts as the primary contributor to ER streaming with a major role in the movement of Golgi bodies. Required for development of pavement cells, trichomes, and stigmatic papillae. Together with XI-F, required for the regulation of organ bending, such as gravitropic root bending. The chain is Myosin-17 from Arabidopsis thaliana (Mouse-ear cress).